The chain runs to 92 residues: Small ribosomal subunit protein uS19 (92 aa).

It belongs to the universal ribosomal protein uS19 family.

In terms of biological role, protein S19 forms a complex with S13 that binds strongly to the 16S ribosomal RNA. This is Small ribosomal subunit protein uS19 from Aliivibrio salmonicida (strain LFI1238) (Vibrio salmonicida (strain LFI1238)).